The chain runs to 556 residues: Formate--tetrahydrofolate ligase (556 aa).

65-72 serves as a coordination point for ATP; it reads TPAGEGKS.

Belongs to the formate--tetrahydrofolate ligase family.

The enzyme catalyses (6S)-5,6,7,8-tetrahydrofolate + formate + ATP = (6R)-10-formyltetrahydrofolate + ADP + phosphate. It functions in the pathway one-carbon metabolism; tetrahydrofolate interconversion. This Clostridium novyi (strain NT) protein is Formate--tetrahydrofolate ligase.